The chain runs to 132 residues: 3'-dehydrocarminate deglycosidase beta subunit (132 aa).

The protein belongs to the C-glycoside deglycosidase beta subunit family. As to quaternary structure, heterodimer composed of an alpha subunit (CarB) and a beta subunit (CarC). Mg(2+) serves as cofactor.

The catalysed reaction is 3'-dehydrocarminate + H(+) = kermesate + 1,5-anhydro-D-erythro-hex-1-en-3-ulose. Its activity is regulated as follows. Activity is strongly reduced in the presence of chelating agents. Carbon-carbon bond-cleaving enzyme which participates in a carminate degradation pathway. Cleaves the C-C bond in 3'-dehydrocarminate to form kermesate. Also shows weak activity with other C-glycosides, such as 3''-dehydropuerarin (3''-oxo-puerarin), 3''-dehydroisoorientin (3''-oxo-homoorientin) and 3'-dehydromangiferin (3'-oxo-mangiferin). This Microbacterium sp protein is 3'-dehydrocarminate deglycosidase beta subunit.